A 111-amino-acid polypeptide reads, in one-letter code: NADH-ubiquinone oxidoreductase chain 3 (111 aa).

The next 3 membrane-spanning stretches (helical) occupy residues 2–22, 54–74, and 82–102; these read ILIWLSIFMLVFIMLTLGMFV, FFVITLIFLIFDVEIYLLLPM, and PTTYLIIFFTFILVAGVFYEW.

Belongs to the complex I subunit 3 family.

It localises to the mitochondrion membrane. It carries out the reaction a ubiquinone + NADH + 5 H(+)(in) = a ubiquinol + NAD(+) + 4 H(+)(out). Its function is as follows. Core subunit of the mitochondrial membrane respiratory chain NADH dehydrogenase (Complex I) that is believed to belong to the minimal assembly required for catalysis. Complex I functions in the transfer of electrons from NADH to the respiratory chain. The immediate electron acceptor for the enzyme is believed to be ubiquinone. The chain is NADH-ubiquinone oxidoreductase chain 3 (ND3) from Artemia franciscana (Brine shrimp).